The sequence spans 472 residues: ATP synthase subunit beta (472 aa).

156 to 163 (GGAGVGKT) is a binding site for ATP.

Belongs to the ATPase alpha/beta chains family. F-type ATPases have 2 components, CF(1) - the catalytic core - and CF(0) - the membrane proton channel. CF(1) has five subunits: alpha(3), beta(3), gamma(1), delta(1), epsilon(1). CF(0) has three main subunits: a(1), b(2) and c(9-12). The alpha and beta chains form an alternating ring which encloses part of the gamma chain. CF(1) is attached to CF(0) by a central stalk formed by the gamma and epsilon chains, while a peripheral stalk is formed by the delta and b chains.

Its subcellular location is the cell membrane. The enzyme catalyses ATP + H2O + 4 H(+)(in) = ADP + phosphate + 5 H(+)(out). In terms of biological role, produces ATP from ADP in the presence of a proton gradient across the membrane. The catalytic sites are hosted primarily by the beta subunits. The protein is ATP synthase subunit beta of Symbiobacterium thermophilum (strain DSM 24528 / JCM 14929 / IAM 14863 / T).